The primary structure comprises 297 residues: Phosphatidylserine decarboxylase proenzyme (297 aa).

Residues D92, H149, and S254 each act as charge relay system; for autoendoproteolytic cleavage activity in the active site. S254 acts as the Schiff-base intermediate with substrate; via pyruvic acid; for decarboxylase activity in catalysis. S254 is modified (pyruvic acid (Ser); by autocatalysis).

This sequence belongs to the phosphatidylserine decarboxylase family. PSD-B subfamily. Prokaryotic type I sub-subfamily. As to quaternary structure, heterodimer of a large membrane-associated beta subunit and a small pyruvoyl-containing alpha subunit. Pyruvate is required as a cofactor. Is synthesized initially as an inactive proenzyme. Formation of the active enzyme involves a self-maturation process in which the active site pyruvoyl group is generated from an internal serine residue via an autocatalytic post-translational modification. Two non-identical subunits are generated from the proenzyme in this reaction, and the pyruvate is formed at the N-terminus of the alpha chain, which is derived from the carboxyl end of the proenzyme. The autoendoproteolytic cleavage occurs by a canonical serine protease mechanism, in which the side chain hydroxyl group of the serine supplies its oxygen atom to form the C-terminus of the beta chain, while the remainder of the serine residue undergoes an oxidative deamination to produce ammonia and the pyruvoyl prosthetic group on the alpha chain. During this reaction, the Ser that is part of the protease active site of the proenzyme becomes the pyruvoyl prosthetic group, which constitutes an essential element of the active site of the mature decarboxylase.

It is found in the cell membrane. The catalysed reaction is a 1,2-diacyl-sn-glycero-3-phospho-L-serine + H(+) = a 1,2-diacyl-sn-glycero-3-phosphoethanolamine + CO2. It participates in phospholipid metabolism; phosphatidylethanolamine biosynthesis; phosphatidylethanolamine from CDP-diacylglycerol: step 2/2. In terms of biological role, catalyzes the formation of phosphatidylethanolamine (PtdEtn) from phosphatidylserine (PtdSer). This is Phosphatidylserine decarboxylase proenzyme from Bordetella parapertussis (strain 12822 / ATCC BAA-587 / NCTC 13253).